Here is a 747-residue protein sequence, read N- to C-terminus: RNA polymerase II assembly factor rtp1 (747 aa).

HEAT repeat units follow at residues 37–75, 103–141, 320–358, 381–418, 459–485, 486–523, and 557–594; these read NYFL…LLGV, QIYN…NCHE, DIIR…VCGT, SQLA…NVDS, EENE…LDLE, NPIS…SKDD, and INPV…KYDD.

This sequence belongs to the Tango6 family. As to quaternary structure, interacts with RNA polymerase II subunits. Interacts with nuclear pore complex subunits.

It is found in the cytoplasm. Its subcellular location is the nucleus. Required for the cytoplasmic assembly and the nuclear import of RNA polymerase II. The protein is RNA polymerase II assembly factor rtp1 of Schizosaccharomyces pombe (strain 972 / ATCC 24843) (Fission yeast).